We begin with the raw amino-acid sequence, 2382 residues long: Serine/threonine-protein kinase WNK1 (2382 aa).

2 disordered regions span residues 1–81 (MSGG…RFFR) and 95–203 (LPGL…QQDD). 2 positions are modified to phosphoserine: S15 and S19. Residues 50–66 (RTEEYRRRRHTMDKDSR) are compositionally biased toward basic and acidic residues. T60 bears the Phosphothreonine mark. 2 stretches are compositionally biased toward low complexity: residues 95–108 (LPGLPLSLPQPSIP) and 125–153 (VTATATSQVAQQPPAAAAPGEQAVAGPAP). S167 and S174 each carry phosphoserine. Positions 221-479 (LKFDIEIGRG…IKDLLNHAFF (259 aa)) constitute a Protein kinase domain. Position 231 (S231) interacts with ATP. Chloride-binding residues include F283 and L299. ATP contacts are provided by residues 301-304 (TELM) and K351. D368 serves as the catalytic Proton acceptor. The chloride site is built by L369 and L371. Phosphoserine; by autocatalysis occurs at positions 378 and 382. Residues 488–555 (ELAEEDDGEK…VCEGDHKTMA (68 aa)) are autoinhibitory domain. Over residues 573 to 588 (QLVREEQEKKKQEESS) the composition is skewed to basic and acidic residues. Disordered stretches follow at residues 573-779 (QLVR…QPQA), 1018-1041 (QPGGSLAQAPTTSSQQAVLESTQG), and 1053-1119 (VAQT…SRPK). The span at 598–614 (ASQTGIKQLPSASTGIP) shows a compositional bias: polar residues. Low complexity predominate over residues 615 to 625 (TASTTSASVST). An interaction with KLHL3 region spans residues 628 to 638 (EPEEPEADQHQ). Residues 637-689 (HQQLQYQQPSISVLSDGTVDSGQGSSVFTESRVSSQQTVSYGSQHEQAHSTGT) are compositionally biased toward polar residues. Residues 709-779 (PPSSVAQGQS…TAQPVSQPQA (71 aa)) show a composition bias toward low complexity. A compositionally biased stretch (polar residues) spans 1025-1041 (QAPTTSSQQAVLESTQG). A compositionally biased stretch (low complexity) spans 1053-1077 (VAQTQATQPTTLASSVDSAHSDVAS). The segment covering 1080–1090 (SDGNENVPSSS) has biased composition (polar residues). The span at 1098–1119 (TKRHYRKSVRSRSRHEKTSRPK) shows a compositional bias: basic residues. An RFXV motif 1 motif is present at residues 1257–1260 (RFIV). At S1261 the chain carries Phosphoserine. Low complexity-rich tracts occupy residues 1457 to 1467 (SASAGGSTATP) and 1733 to 1745 (QVSTPVSTTTSGV). 2 disordered regions span residues 1457–1476 (SASAGGSTATPGPKPPAVVS) and 1733–1790 (QVST…TQSQ). Residue T1848 is modified to Phosphothreonine. The RFXV motif 2 signature appears at 1859 to 1862 (RFQV). Residues 1866–1948 (ADGAQKEGKN…QPTKVGRFQV (83 aa)) are disordered. Residues 1869–1884 (AQKEGKNKSEDAKSVH) are compositionally biased toward basic and acidic residues. A compositionally biased stretch (low complexity) spans 1887–1905 (SSTSESSVLSSSSPESTLV). A compositionally biased stretch (polar residues) spans 1927-1940 (KTTASEAKSDTGQP). 2 consecutive short sequence motifs (RFXV motif) follow at residues 1945-1948 (RFQV) and 1957-1960 (RFSV). 7 positions are modified to phosphoserine: S1978, S2002, S2011, S2012, S2027, S2029, and S2032. A compositionally biased stretch (basic and acidic residues) spans 1994 to 2003 (PKKEKPELSE). Disordered stretches follow at residues 1994–2069 (PKKE…DIED) and 2101–2196 (LYTK…NLYS). Over residues 2035 to 2062 (QLSSKSLPSQNLSQSLSNSFNSSYMSSD) the composition is skewed to low complexity. Residue S2121 is modified to Phosphoserine. Residues 2122–2134 (GRRRRPTKSKGSK) show a composition bias toward basic residues. Residues 2135 to 2145 (SSRSSSLGNKS) are compositionally biased toward low complexity. Composition is skewed to polar residues over residues 2146 to 2167 (PQLSGNLSGQSAASVLHPQQTL) and 2175 to 2196 (ESGQNQLLQPLKPSPSSDNLYS). An amphipathic alpha-helix region spans residues 2241–2261 (SRKGTFTDDLHKLVDNWARDA). Phosphoserine is present on residues S2270 and S2286. A disordered region spans residues 2332 to 2352 (PFGAQWSGTGGPAPQPLGQFQ). S2370 and S2372 each carry phosphoserine.

It belongs to the protein kinase superfamily. Ser/Thr protein kinase family. WNK subfamily. As to quaternary structure, interacts with WNK3. Interacts with WNK4; inhibiting the activity of WNK4. Interacts with SGK1; promoting its activation. Associates with the mTORC2 complex. Interacts with UVRAG. Interacts (via amphipathic alpha-helix region) with EMC2; promoting the ER membrane protein complex assembly. In terms of assembly, interacts with isoform 1; inhibiting isoform 1 activity. The cofactor is Mg(2+). Autophosphorylated at Ser-378 and Ser-382, promoting its activity. Autophosphorylation at Ser-382 is inhibited by intracellular calcium. Phosphorylation at Thr-60 increases ability to activate SGK1. In terms of processing, ubiquitinated by the BCR(KLHL3) complex, leading to its degradation. Also ubiquitinated by the BCR(KLHL2) complex. Post-translationally, may be O-glycosylated. As to expression, widely expressed, with highest levels observed in the testis, heart, kidney and skeletal muscle. Strong expression in dorsal root ganglia and spinal cord. In terms of tissue distribution, this isoform is kidney-specific and specifically expressed in the distal convoluted tubule (DCT) and connecting tubule (CNT) of the nephron.

The protein localises to the cytoplasm. It is found in the nucleus. The protein resides in the cytoskeleton. Its subcellular location is the spindle. The catalysed reaction is L-seryl-[protein] + ATP = O-phospho-L-seryl-[protein] + ADP + H(+). It catalyses the reaction L-threonyl-[protein] + ATP = O-phospho-L-threonyl-[protein] + ADP + H(+). Its activity is regulated as follows. Activated in response to hyperosmotic stress: cell shrinkage promotes formation of a membraneless compartment that concentrates WNK1 with its substrates, OXSR1/OSR1 and STK39/SPAK. Activation requires autophosphorylation of Ser-382 and, to a lower extent, Ser-378. Autophosphorylation and subsequent activation is inhibited by increases in intracellular ionic strength: Cl(-) potently inhibits WNK1 kinase activity via direct binding. Also inhibited by K(+) ions. Inhibited by small compounds staurosporine, tyrphostin 47, as well as Src tyrosine kinase inhibitors PP1 and PP2. Its function is as follows. Serine/threonine-protein kinase component of the WNK1-SPAK/OSR1 kinase cascade, which acts as a key regulator of blood pressure and regulatory volume increase by promoting ion influx. WNK1 mediates regulatory volume increase in response to hyperosmotic stress by acting as a molecular crowding sensor, which senses cell shrinkage and mediates formation of a membraneless compartment by undergoing liquid-liquid phase separation. The membraneless compartment concentrates WNK1 with its substrates, OXSR1/OSR1 and STK39/SPAK, promoting WNK1-dependent phosphorylation and activation of downstream kinases OXSR1/OSR1 and STK39/SPAK. Following activation, OXSR1/OSR1 and STK39/SPAK catalyze phosphorylation of ion cotransporters SLC12A1/NKCC2, SLC12A2/NKCC1, SLC12A5/KCC2 and SLC12A6/KCC3, regulating their activity. Phosphorylation of Na-K-Cl cotransporters SLC12A2/NKCC1 and SLC12A2/NKCC1 promote their activation and ion influx; simultaneously, phosphorylation of K-Cl cotransporters SLC12A5/KCC2 and SLC12A6/KCC3 inhibit their activity, blocking ion efflux. Also acts as a regulator of angiogenesis in endothelial cells via activation of OXSR1/OSR1 and STK39/SPAK: activation of OXSR1/OSR1 regulates chemotaxis and invasion, while STK39/SPAK regulates endothelial cell proliferation. Also acts independently of the WNK1-SPAK/OSR1 kinase cascade by catalyzing phosphorylation of other substrates, such as SYT2, PCF11 and NEDD4L. Mediates phosphorylation of SYT2, regulating SYT2 association with phospholipids and membrane-binding. Regulates mRNA export in the nucleus by mediating phosphorylation of PCF11, thereby decreasing the association between PCF11 and POLR2A/RNA polymerase II and promoting mRNA export to the cytoplasm. Acts as a negative regulator of autophagy. Required for the abscission step during mitosis, independently of the WNK1-SPAK/OSR1 kinase cascade. May also play a role in actin cytoskeletal reorganization. Also acts as a scaffold protein independently of its protein kinase activity: negatively regulates cell membrane localization of various transporters and channels, such as SLC4A4, SLC26A6, SLC26A9, TRPV4 and CFTR. Involved in the regulation of epithelial Na(+) channel (ENaC) by promoting activation of SGK1 in a kinase-independent manner: probably acts as a scaffold protein that promotes the recruitment of SGK1 to the mTORC2 complex in response to chloride, leading to mTORC2-dependent phosphorylation and activation of SGK1. Acts as an assembly factor for the ER membrane protein complex independently of its protein kinase activity: associates with EMC2 in the cytoplasm via its amphipathic alpha-helix, and prevents EMC2 ubiquitination and subsequent degradation, thereby promoting EMC2 stabilization. In terms of biological role, kinase-defective isoform specifically expressed in kidney, which acts as a dominant-negative regulator of the longer isoform 1. Does not directly inhibit WNK4 and has no direct effect on sodium and chloride ion transport. Down-regulates sodium-chloride cotransporter activity indirectly by inhibiting isoform 1, it associates with isoform 1 and attenuates its kinase activity. In kidney, may play an important role regulating sodium and potassium balance. The polypeptide is Serine/threonine-protein kinase WNK1 (Homo sapiens (Human)).